Consider the following 197-residue polypeptide: UPF0301 protein Adeh_3962 (197 aa).

Belongs to the UPF0301 (AlgH) family.

This is UPF0301 protein Adeh_3962 from Anaeromyxobacter dehalogenans (strain 2CP-C).